The primary structure comprises 351 residues: Photosystem II D2 protein (351 aa).

Residues 39-59 (TAYLAIGGWLTGTTFVTSWYT) form a helical membrane-spanning segment. Histidine 116 is a binding site for chlorophyll a. A helical membrane pass occupies residues 123-139 (GFMLRQFEISRLVGIRP). Pheophytin a contacts are provided by glutamine 128 and asparagine 141. The helical transmembrane segment at 151 to 164 (VFVSVFLIYPLGQS) threads the bilayer. A chlorophyll a-binding site is contributed by histidine 196. A helical membrane pass occupies residues 206-226 (GALLSAIHGVTVENTLYEDGE). A plastoquinone is bound by residues histidine 213 and phenylalanine 260. Residue histidine 213 participates in Fe cation binding. Histidine 267 serves as a coordination point for Fe cation. Residues 277–293 (GLWTSSIGIIGLALNLR) traverse the membrane as a helical segment.

The protein belongs to the reaction center PufL/M/PsbA/D family. As to quaternary structure, PSII is composed of 1 copy each of membrane proteins PsbA, PsbB, PsbC, PsbD, PsbE, PsbF, PsbH, PsbI, PsbJ, PsbK, PsbL, PsbM, PsbT, PsbX, PsbY, PsbZ, Psb30/Ycf12, peripheral proteins PsbO, CyanoQ (PsbQ), PsbU, PsbV and a large number of cofactors. It forms dimeric complexes. The cofactor is The D1/D2 heterodimer binds P680, chlorophylls that are the primary electron donor of PSII, and subsequent electron acceptors. It shares a non-heme iron and each subunit binds pheophytin, quinone, additional chlorophylls, carotenoids and lipids. There is also a Cl(-1) ion associated with D1 and D2, which is required for oxygen evolution. The PSII complex binds additional chlorophylls, carotenoids and specific lipids..

Its subcellular location is the host cellular thylakoid membrane. The catalysed reaction is 2 a plastoquinone + 4 hnu + 2 H2O = 2 a plastoquinol + O2. In terms of biological role, photosystem II (PSII) is a light-driven water:plastoquinone oxidoreductase that uses light energy to abstract electrons from H(2)O, generating O(2) and a proton gradient subsequently used for ATP formation. It consists of a core antenna complex that captures photons, and an electron transfer chain that converts photonic excitation into a charge separation. The D1/D2 (PsbA/PsbD) reaction center heterodimer binds P680, the primary electron donor of PSII as well as several subsequent electron acceptors. D2 is needed for assembly of a stable PSII complex. The protein is Photosystem II D2 protein (psbD) of Synechococcus.